The chain runs to 661 residues: UvrABC system protein B (661 aa).

Residues Lys28–Ile414 form the Helicase ATP-binding domain. Gly41 to Thr48 serves as a coordination point for ATP. The Beta-hairpin motif lies at Tyr94–Ile117. Residues Gln432–Ile598 form the Helicase C-terminal domain. The tract at residues Asn604 to Gln625 is disordered. Basic and acidic residues predominate over residues Thr607–Lys617. One can recognise a UVR domain in the interval Gln625 to Glu660.

It belongs to the UvrB family. In terms of assembly, forms a heterotetramer with UvrA during the search for lesions. Interacts with UvrC in an incision complex.

It localises to the cytoplasm. In terms of biological role, the UvrABC repair system catalyzes the recognition and processing of DNA lesions. A damage recognition complex composed of 2 UvrA and 2 UvrB subunits scans DNA for abnormalities. Upon binding of the UvrA(2)B(2) complex to a putative damaged site, the DNA wraps around one UvrB monomer. DNA wrap is dependent on ATP binding by UvrB and probably causes local melting of the DNA helix, facilitating insertion of UvrB beta-hairpin between the DNA strands. Then UvrB probes one DNA strand for the presence of a lesion. If a lesion is found the UvrA subunits dissociate and the UvrB-DNA preincision complex is formed. This complex is subsequently bound by UvrC and the second UvrB is released. If no lesion is found, the DNA wraps around the other UvrB subunit that will check the other stand for damage. The polypeptide is UvrABC system protein B (Staphylococcus haemolyticus (strain JCSC1435)).